Consider the following 73-residue polypeptide: Ubiquitin-like modifier HUB1 (73 aa).

One can recognise a Ubiquitin-like domain in the interval 1 to 73 (MIEVVVNDRL…DQTNLELYYL (73 aa)).

Functionally, forms conjugate with SPH1 and HBT1. Involved in morphogenesis. The sequence is that of Ubiquitin-like modifier HUB1 (HUB1) from Saccharomyces cerevisiae (strain ATCC 204508 / S288c) (Baker's yeast).